A 117-amino-acid polypeptide reads, in one-letter code: MGINNINKIPVRNNKISFVAVHLIKALTSKKQEKLVKLQRKKKIISVIKTWSRSSTIVPLMIGEIIAVHNGREHIPVYITEEMVGFKLGEFATTRIWRGHLKKTTHKKNNKTYGLYF.

This sequence belongs to the universal ribosomal protein uS19 family.

The protein resides in the plastid. Functionally, protein S19 forms a complex with S13 that binds strongly to the 16S ribosomal RNA. This chain is Small ribosomal subunit protein uS19c (rps19), found in Helicosporidium sp. subsp. Simulium jonesii (Green alga).